Consider the following 164-residue polypeptide: MSSSVSSKTRYWVLALAAIVLDQWSKWAVLSSFQYRERVNVIPSFFDLTLVYNPGAAFSFLADQGGWQKYFFLVLAVAVSAYLVRAILRDEFATLGKTGAAMIIGGALGNVIDRLIHGHVVDFLLFYWQNWFYPAFNIADSFICVGAVLAVLDNIVHRKDGKKT.

4 consecutive transmembrane segments (helical) span residues 11 to 31, 41 to 61, 64 to 84, and 92 to 112; these read YWVL…AVLS, VIPS…FSFL, QGGW…AYLV, and FATL…GNVI. Residues D122 and D140 contribute to the active site. The helical transmembrane segment at 132–152 threads the bilayer; that stretch reads FYPAFNIADSFICVGAVLAVL.

The protein belongs to the peptidase A8 family.

The protein resides in the cell inner membrane. The catalysed reaction is Release of signal peptides from bacterial membrane prolipoproteins. Hydrolyzes -Xaa-Yaa-Zaa-|-(S,diacylglyceryl)Cys-, in which Xaa is hydrophobic (preferably Leu), and Yaa (Ala or Ser) and Zaa (Gly or Ala) have small, neutral side chains.. The protein operates within protein modification; lipoprotein biosynthesis (signal peptide cleavage). Its function is as follows. This protein specifically catalyzes the removal of signal peptides from prolipoproteins. The protein is Lipoprotein signal peptidase of Neisseria meningitidis serogroup C (strain 053442).